The following is a 446-amino-acid chain: DDB1- and CUL4-associated factor 12 (446 aa).

A compositionally biased stretch (basic residues) spans 1–12 (MTRRAVSRKRRA). The disordered stretch occupies residues 1-33 (MTRRAVSRKRRAAPGTGPGEQSDWDHSAHKRKR). 4 WD repeats span residues 132-173 (SHQS…PVCV), 177-215 (GHNDWIFSIAWISDTMAVSGSRDGSMALWEMTEEILSKS), 245-284 (PVNCKVRALAFNSKNKELGAVSLDGFFHLWKAELTLAKLL), and 333-370 (EQGSGIRSVSFYEHIVTVGTGQGALLFYDIRAQRFLED).

Belongs to the WD repeat DCAF12 family. As to quaternary structure, component of the DCX(DCAF12) E3 ubiquitin ligase complex, at least composed of cul4 (cul4a or cul4b), ddb1, dcaf12 and rbx1.

The protein resides in the cytoplasm. It is found in the cytoskeleton. It localises to the microtubule organizing center. The protein localises to the centrosome. Its subcellular location is the nucleus. The protein operates within protein modification; protein ubiquitination. Its function is as follows. Substrate-recognition component of a DCX (DDB1-CUL4-X-box) E3 ubiquitin-protein ligase complex of the DesCEND (destruction via C-end degrons) pathway, which recognizes a C-degron located at the extreme C terminus of target proteins, leading to their ubiquitination and degradation. The C-degron recognized by the DesCEND pathway is usually a motif of less than ten residues and can be present in full-length proteins, truncated proteins or proteolytically cleaved forms. The DCX(DCAF12) complex specifically recognizes proteins with a diglutamate (Glu-Glu) at the C-terminus leading to their ubiquitination and degradation. Also directly recognizes the C-terminal glutamate-leucine (Glu-Leu) degron as an alternative degron in proteins leading to their ubiquitination and degradation. The protein is DDB1- and CUL4-associated factor 12 of Xenopus tropicalis (Western clawed frog).